The chain runs to 646 residues: NADP-dependent malic enzyme 4, chloroplastic (646 aa).

The N-terminal 74 residues, 1–74 (MISLTPSLFL…LETSAADIVP (74 aa)), are a transit peptide targeting the chloroplast. The Proton donor role is filled by Y194. Residue R247 participates in NADP(+) binding. The active-site Proton acceptor is K265. A divalent metal cation contacts are provided by E337, D338, and D361. Residues D361, 390 to 406 (LFLG…ELIA), and N502 contribute to the NADP(+) site.

This sequence belongs to the malic enzymes family. As to quaternary structure, homodimer and homotetramer. Mg(2+) is required as a cofactor. Mn(2+) serves as cofactor. As to expression, expressed in leaves, stems, flowers and roots, mainly in vascular system. In roots, present in the stele, including the vascular tissue and the pericycle, mainly at emerging lateral roots and at root tips.

The protein localises to the plastid. The protein resides in the chloroplast. It carries out the reaction (S)-malate + NADP(+) = pyruvate + CO2 + NADPH. The catalysed reaction is oxaloacetate + H(+) = pyruvate + CO2. Its pathway is photosynthesis; C3 acid pathway. Functionally, the chloroplastic ME isoform decarboxylates malate shuttled from neighboring mesophyll cells. The CO(2) released is then refixed by ribulose-bisphosphate carboxylase. This pathway eliminates the photorespiratory loss of CO(2) that occurs in most plants. This Arabidopsis thaliana (Mouse-ear cress) protein is NADP-dependent malic enzyme 4, chloroplastic (NADP-ME4).